Here is a 373-residue protein sequence, read N- to C-terminus: Queuine tRNA-ribosyltransferase accessory subunit 2 (373 aa).

Positions 320, 322, 325, and 351 each coordinate Zn(2+).

This sequence belongs to the queuine tRNA-ribosyltransferase family. QTRT2 subfamily. As to quaternary structure, heterodimer of a catalytic subunit and an accessory subunit. Zn(2+) is required as a cofactor.

Its subcellular location is the cytoplasm. Non-catalytic subunit of the queuine tRNA-ribosyltransferase (TGT) that catalyzes the base-exchange of a guanine (G) residue with queuine (Q) at position 34 (anticodon wobble position) in tRNAs with GU(N) anticodons (tRNA-Asp, -Asn, -His and -Tyr), resulting in the hypermodified nucleoside queuosine (7-(((4,5-cis-dihydroxy-2-cyclopenten-1-yl)amino)methyl)-7-deazaguanosine). This Caenorhabditis elegans protein is Queuine tRNA-ribosyltransferase accessory subunit 2.